A 161-amino-acid polypeptide reads, in one-letter code: Endoribonuclease YbeY (161 aa).

Residues His-121, His-125, and His-131 each coordinate Zn(2+).

This sequence belongs to the endoribonuclease YbeY family. Zn(2+) is required as a cofactor.

It localises to the cytoplasm. Functionally, single strand-specific metallo-endoribonuclease involved in late-stage 70S ribosome quality control and in maturation of the 3' terminus of the 16S rRNA. This chain is Endoribonuclease YbeY, found in Bordetella avium (strain 197N).